The following is a 365-amino-acid chain: S-adenosylmethionine:tRNA ribosyltransferase-isomerase (365 aa).

It belongs to the QueA family. Monomer.

The protein localises to the cytoplasm. The enzyme catalyses 7-aminomethyl-7-carbaguanosine(34) in tRNA + S-adenosyl-L-methionine = epoxyqueuosine(34) in tRNA + adenine + L-methionine + 2 H(+). The protein operates within tRNA modification; tRNA-queuosine biosynthesis. Functionally, transfers and isomerizes the ribose moiety from AdoMet to the 7-aminomethyl group of 7-deazaguanine (preQ1-tRNA) to give epoxyqueuosine (oQ-tRNA). The polypeptide is S-adenosylmethionine:tRNA ribosyltransferase-isomerase (Rickettsia rickettsii (strain Iowa)).